We begin with the raw amino-acid sequence, 376 residues long: Carbohydrate sulfotransferase 14 (376 aa).

Over 1–39 the chain is Cytoplasmic; sequence MFPRPLTPLAAPNGAEPLGRALRRAPLGRARAGLGGPPL. The helical; Signal-anchor for type II membrane protein transmembrane segment at 40–60 threads the bilayer; that stretch reads LLPSMLMFAVIVASSGLLLMI. Residues 61–376 lie on the Lumenal side of the membrane; sequence ERGILAEMKP…PNVTKEACQQ (316 aa). N-linked (GlcNAc...) asparagine glycosylation is present at Asn110. Residues 155–161 and 213–221 contribute to the 3'-phosphoadenylyl sulfate site; these read PKVACSN and REPLERLLS. Asn368 carries N-linked (GlcNAc...) asparagine glycosylation.

It belongs to the sulfotransferase 2 family. Widely expressed. Expressed at high level in pituitary gland, placenta, uterus and thyroid.

The protein resides in the golgi apparatus membrane. The catalysed reaction is dermatan + n 3'-phosphoadenylyl sulfate = dermatan 4'-sulfate + n adenosine 3',5'-bisphosphate + n H(+). Its function is as follows. Catalyzes the transfer of sulfate to position 4 of the N-acetylgalactosamine (GalNAc) residue of dermatan sulfate. Plays a pivotal role in the formation of 4-0-sulfated IdoA blocks in dermatan sulfate. Transfers sulfate to the C-4 hydroxyl of beta1,4-linked GalNAc that is substituted with an alpha-linked iduronic acid (IdoUA) at the C-3 hydroxyl. Transfers sulfate more efficiently to GalNAc residues in -IdoUA-GalNAc-IdoUA- than in -GlcUA-GalNAc-GlcUA-sequences. Has preference for partially desulfated dermatan sulfate. Addition of sulfate to GalNAc may occur immediately after epimerization of GlcUA to IdoUA. Appears to have an important role in the formation of the cerebellar neural network during postnatal brain development. This Homo sapiens (Human) protein is Carbohydrate sulfotransferase 14 (CHST14).